A 203-amino-acid polypeptide reads, in one-letter code: tRNA (guanine-N(7)-)-methyltransferase (203 aa).

S-adenosyl-L-methionine-binding residues include Glu-34, Glu-59, Asp-86, and Asp-107. Asp-107 is a catalytic residue. Residues Lys-111, Asp-143, and 181–184 (TSYE) contribute to the substrate site.

Belongs to the class I-like SAM-binding methyltransferase superfamily. TrmB family.

The catalysed reaction is guanosine(46) in tRNA + S-adenosyl-L-methionine = N(7)-methylguanosine(46) in tRNA + S-adenosyl-L-homocysteine. The protein operates within tRNA modification; N(7)-methylguanine-tRNA biosynthesis. Functionally, catalyzes the formation of N(7)-methylguanine at position 46 (m7G46) in tRNA. The polypeptide is tRNA (guanine-N(7)-)-methyltransferase (Mycoplasmopsis pulmonis (strain UAB CTIP) (Mycoplasma pulmonis)).